Consider the following 315-residue polypeptide: Protein phosphatase PTC7 homolog fig (315 aa).

The 256-residue stretch at 54–309 (KHSIASAKDN…DDITVILATV (256 aa)) folds into the PPM-type phosphatase domain. 3 residues coordinate Mn(2+): D86, G87, and D231.

It belongs to the PP2C family. It depends on Mg(2+) as a cofactor. The cofactor is Mn(2+).

The catalysed reaction is O-phospho-L-seryl-[protein] + H2O = L-seryl-[protein] + phosphate. It catalyses the reaction O-phospho-L-threonyl-[protein] + H2O = L-threonyl-[protein] + phosphate. This is Protein phosphatase PTC7 homolog fig from Drosophila willistoni (Fruit fly).